The chain runs to 490 residues: NAD/NADP-dependent betaine aldehyde dehydrogenase (490 aa).

Residues Thr26, Ile27, and Asp93 each coordinate K(+). Position 150–153 (150–153) interacts with NADPH; that stretch reads GAWN. Lys162 acts as the Charge relay system in catalysis. 176–179 contacts NADPH; that stretch reads KPSE. Position 180 (Val180) interacts with K(+). NADPH is bound by residues Gly209 and 230 to 233; that span reads GTST. Leu246 is a K(+) binding site. The Proton acceptor role is filled by Glu252. Residues Cys286 and Glu387 each coordinate NADPH. Cys286 (nucleophile) is an active-site residue. Cysteine sulfenic acid (-SOH) is present on Cys286. 2 residues coordinate K(+): Lys457 and Gly460. Glu464 acts as the Charge relay system in catalysis.

Belongs to the aldehyde dehydrogenase family. Dimer of dimers. It depends on K(+) as a cofactor.

It carries out the reaction betaine aldehyde + NAD(+) + H2O = glycine betaine + NADH + 2 H(+). It catalyses the reaction betaine aldehyde + NADP(+) + H2O = glycine betaine + NADPH + 2 H(+). It participates in amine and polyamine biosynthesis; betaine biosynthesis via choline pathway; betaine from betaine aldehyde: step 1/1. Functionally, involved in the biosynthesis of the osmoprotectant glycine betaine. Catalyzes the irreversible oxidation of betaine aldehyde to the corresponding acid. In P.aeruginosa this reaction is a compulsory step in the assimilation of carbon and nitrogen when bacteria are growing in choline or choline precursors. Can use NADP(+) with similar efficiency to NAD(+), a property that can be used by the bacterium to produce the NADPH needed to combat the oxidative stress imposed by the host defenses. The protein is NAD/NADP-dependent betaine aldehyde dehydrogenase of Pseudomonas aeruginosa (strain ATCC 15692 / DSM 22644 / CIP 104116 / JCM 14847 / LMG 12228 / 1C / PRS 101 / PAO1).